The chain runs to 415 residues: Multidrug resistance protein MdtA (415 aa).

The N-terminal stretch at 1–21 is a signal peptide; it reads MKGSYKSRWVIVIVVVIAAIA. Positions 31–47 are enriched in polar residues; it reads DSQSAAPGATKQAQQSP. Disordered regions lie at residues 31-60 and 392-415; these read DSQS…GPLA and EAQS…GARS. Basic and acidic residues predominate over residues 399-415; that stretch reads PEEKATSREYAKKGARS.

The protein belongs to the membrane fusion protein (MFP) (TC 8.A.1) family. In terms of assembly, part of a tripartite efflux system composed of MdtA, MdtB and MdtC.

It is found in the cell inner membrane. The MdtABC tripartite complex confers resistance against novobiocin and deoxycholate. This is Multidrug resistance protein MdtA from Escherichia coli O8 (strain IAI1).